We begin with the raw amino-acid sequence, 239 residues long: DNA repair protein RecO (239 aa).

This sequence belongs to the RecO family.

Its function is as follows. Involved in DNA repair and RecF pathway recombination. This chain is DNA repair protein RecO, found in Cereibacter sphaeroides (strain ATCC 17029 / ATH 2.4.9) (Rhodobacter sphaeroides).